A 68-amino-acid chain; its full sequence is Large ribosomal subunit protein uL29 (68 aa).

The protein belongs to the universal ribosomal protein uL29 family.

This chain is Large ribosomal subunit protein uL29, found in Finegoldia magna (strain ATCC 29328 / DSM 20472 / WAL 2508) (Peptostreptococcus magnus).